Reading from the N-terminus, the 766-residue chain is U3 small nucleolar RNA-associated protein 14 homolog C (766 aa).

The interval 14-42 (HQEELVDLPKNYPLSENEDEGDSDGERKH) is disordered. 4 positions are modified to phosphoserine: S28, S51, S76, and S80. A Glycyl lysine isopeptide (Lys-Gly) (interchain with G-Cter in SUMO2) cross-link involves residue K121. T204 is subject to Phosphothreonine. 2 coiled-coil regions span residues 216-245 (LEEA…KEKK) and 316-346 (LEAR…EEEE). Positions 365 to 563 (MNVDGPNPWM…EQLINLQNFL (199 aa)) are disordered. A compositionally biased stretch (low complexity) spans 396–405 (ELAAHEVSAS). S403 and S405 each carry phosphoserine. Over residues 407–434 (AEERPVAEEEILLREFEERQSLRKRSEL) the composition is skewed to basic and acidic residues. The residue at position 443 (S443) is a Phosphoserine. Residue K447 forms a Glycyl lysine isopeptide (Lys-Gly) (interchain with G-Cter in SUMO2) linkage. At S451 the chain carries Phosphoserine. Positions 452–470 (QEVLSELRALSQKLKEKHQ) form a coiled coil. Over residues 466–475 (KEKHQSRKQK) the composition is skewed to basic residues. Basic and acidic residues predominate over residues 502 to 527 (RSERVQTLEELEELGKEDCFQNKELP). K517 is covalently cross-linked (Glycyl lysine isopeptide (Lys-Gly) (interchain with G-Cter in SUMO2)). A compositionally biased stretch (polar residues) spans 533-542 (GQQSERTPNN). Over residues 545–555 (DAPKEKKEKEQ) the composition is skewed to basic and acidic residues. S567 is modified (phosphoserine). Residue K732 forms a Glycyl lysine isopeptide (Lys-Gly) (interchain with G-Cter in SUMO2) linkage. Residues 734-766 (EDVGYQSSSRSDLPVIQRNPKRITTRHNKEEKL) form a disordered region.

The protein belongs to the UTP14 family. In terms of tissue distribution, expressed in testis.

Its subcellular location is the nucleus. The protein resides in the nucleolus. Essential for spermatogenesis. May be required specifically for ribosome biogenesis and hence protein synthesis during male meiosis. This chain is U3 small nucleolar RNA-associated protein 14 homolog C (UTP14C), found in Homo sapiens (Human).